The following is a 207-amino-acid chain: rRNA N(6)-adenosine-methyltransferase METTL5 (207 aa).

Residues Q25, T28, G56, C59, V61, D78, and D105–V106 contribute to the S-adenosyl-L-methionine site.

The protein belongs to the methyltransferase superfamily. PrmA family.

It is found in the nucleus. The protein resides in the presynapse. The protein localises to the postsynapse. It catalyses the reaction adenosine(1832) in 18S rRNA + S-adenosyl-L-methionine = N(6)-methyladenosine(1832) in 18S rRNA + S-adenosyl-L-homocysteine + H(+). RRNA N6-adenosine-methyltransferase activity is inhibited by zinc. Its function is as follows. Catalytic subunit of a heterodimer with TRMT112, which specifically methylates the 6th position of adenine in position 1832 of 18S rRNA. N6-methylation of adenine(1832) in 18S rRNA resides in the decoding center of 18S rRNA and is required for translation and embryonic stem cells (ESCs) pluripotency and differentiation. The polypeptide is rRNA N(6)-adenosine-methyltransferase METTL5 (Danio rerio (Zebrafish)).